A 135-amino-acid polypeptide reads, in one-letter code: Large ribosomal subunit protein uL16 (135 aa).

Belongs to the universal ribosomal protein uL16 family. As to quaternary structure, part of the 50S ribosomal subunit.

Functionally, binds 23S rRNA and is also seen to make contacts with the A and possibly P site tRNAs. This Desulforapulum autotrophicum (strain ATCC 43914 / DSM 3382 / VKM B-1955 / HRM2) (Desulfobacterium autotrophicum) protein is Large ribosomal subunit protein uL16.